The following is a 424-amino-acid chain: Endoglucanase (424 aa).

The first 19 residues, 1–19, serve as a signal peptide directing secretion; sequence MHRCMPLVAASMAALMLAG. The N-palmitoyl cysteine moiety is linked to residue cysteine 20. A lipid anchor (S-diacylglycerol cysteine) is attached at cysteine 20. A propeptide spanning residues 20–43 is cleaved from the precursor; the sequence is CGGGDGDTTLSTAAATDTTTLKTA. Glutamate 247 functions as the Proton donor in the catalytic mechanism. The active-site Nucleophile is glutamate 359.

This sequence belongs to the glycosyl hydrolase 5 (cellulase A) family.

The protein resides in the cell membrane. It carries out the reaction Endohydrolysis of (1-&gt;4)-beta-D-glucosidic linkages in cellulose, lichenin and cereal beta-D-glucans.. The polypeptide is Endoglucanase (egl) (Ralstonia nicotianae (strain ATCC BAA-1114 / GMI1000) (Ralstonia solanacearum)).